The chain runs to 66 residues: U1-theraphotoxin-Cg1d 1 (66 aa).

A signal peptide spans 1 to 21 (MKMSALFVIFGLALLFCNSFA). A propeptide spanning residues 22–29 (AELKATGR) is cleaved from the precursor. 3 cysteine pairs are disulfide-bonded: cysteine 31/cysteine 46, cysteine 38/cysteine 51, and cysteine 45/cysteine 58. The residue at position 63 (proline 63) is a Proline amide.

Belongs to the neurotoxin 10 (Hwtx-1) family. 46 (Jztx-7/10/12) subfamily. Expressed by the venom gland.

The protein resides in the secreted. Functionally, probable ion channel inhibitor. The polypeptide is U1-theraphotoxin-Cg1d 1 (Chilobrachys guangxiensis (Chinese earth tiger tarantula)).